The primary structure comprises 490 residues: Costunolide synthase (490 aa).

A helical; Signal-anchor for type II membrane protein membrane pass occupies residues 3 to 23 (PLTIVSLAVASFLLFAFWALS). N-linked (GlcNAc...) asparagine glycans are attached at residues Asn167 and Asn255. Cys432 serves as a coordination point for heme.

The protein belongs to the cytochrome P450 family. The cofactor is heme.

It is found in the membrane. The catalysed reaction is germacra-1(10),4,11(13)-trien-12-oate + reduced [NADPH--hemoprotein reductase] + O2 = (+)-costunolide + oxidized [NADPH--hemoprotein reductase] + 2 H2O. Its pathway is secondary metabolite biosynthesis; terpenoid biosynthesis. Functionally, involved in the biosynthesis of germacrene-derived sesquiterpene lactones. Component of the parthenolide biosynthetic pathway; parthenolide and conjugates are promising anti-cancer drugs highly active against colon cancer cells. Hydroxylates germacrene A acid to 6-alpha-hydroxy-germacrne A acid, a precursor of sesquiterpene lactones that spontaneously undergoes a lactonization which yields costunolide. The polypeptide is Costunolide synthase (Lactuca sativa (Garden lettuce)).